Here is a 328-residue protein sequence, read N- to C-terminus: D-cysteine desulfhydrase (328 aa).

Lys-51 carries the N6-(pyridoxal phosphate)lysine modification.

The protein belongs to the ACC deaminase/D-cysteine desulfhydrase family. Homodimer. It depends on pyridoxal 5'-phosphate as a cofactor.

The enzyme catalyses D-cysteine + H2O = hydrogen sulfide + pyruvate + NH4(+) + H(+). Catalyzes the alpha,beta-elimination reaction of D-cysteine and of several D-cysteine derivatives. It could be a defense mechanism against D-cysteine. This chain is D-cysteine desulfhydrase, found in Escherichia coli O7:K1 (strain IAI39 / ExPEC).